Consider the following 3661-residue polypeptide: Serine/threonine-protein kinase SMG1 (3661 aa).

A compositionally biased stretch (low complexity) spans Met-1 to Ser-11. 2 disordered regions span residues Met-1 to Arg-101 and Pro-116 to Ser-144. The tract at residues Met-1 to Val-1977 is interaction with SMG8 and SMG9. Over residues Asn-26–Ala-35 the composition is skewed to polar residues. Composition is skewed to basic and acidic residues over residues Gln-69–Gly-86 and Ala-129–Glu-138. Lys-173 bears the N6-acetyllysine mark. The span at Arg-1154 to Gly-1165 shows a compositional bias: polar residues. Residues Arg-1154–Pro-1175 are disordered. Residues Arg-1283 to Ser-1866 enclose the FAT domain. The HEAT repeat unit spans residues Ala-1817–Ser-1852. The disordered stretch occupies residues Glu-1898 to Leu-1919. A PI3K/PI4K catalytic domain is found at Val-2124–Phe-2463. Residues Ile-2130–Lys-2136 form a G-loop region. A catalytic loop region spans residues Gly-2332–Asn-2340. Residues His-2352–Thr-2376 are activation loop. Residue Thr-3550 is modified to Phosphothreonine. Phosphoserine is present on residues Ser-3556 and Ser-3570. The segment covering Ala-3568–Pro-3579 has biased composition (polar residues). A disordered region spans residues Ala-3568–Lys-3591. Phosphothreonine is present on residues Thr-3573 and Thr-3577. An FATC domain is found at Arg-3629 to Val-3661.

Belongs to the PI3/PI4-kinase family. As to quaternary structure, component of the SMG1C complex composed of SMG1, SMG8 and SMG9; the recruitment of SMG8 to SMG1 N-terminus induces a large conformational change in the SMG1 C-terminal head domain containing the catalytic domain. Component of the transient SURF (SMG1-UPF1-eRF1-eRF3) complex. Part of a complex composed of SMG1, DHX34 and UPF1; within the complex DHX34 acts as a scaffolding protein to facilitate SMG1 phosphorylation of UPF1. Interacts with PRKCI. Interacts with TELO2 and TTI1. Interacts with RUVBL1 and RUVBL2. Interacts with UPF2. Interacts with DHX34 (via C-terminus); the interaction is RNA-independent. Mn(2+) is required as a cofactor. Autophosphorylated. In terms of tissue distribution, widely expressed, with highest level in heart and skeletal muscle. Expressed in placenta, brain, lung and spleen, but not in liver.

The protein resides in the nucleus. It localises to the cytoplasm. The enzyme catalyses L-seryl-[protein] + ATP = O-phospho-L-seryl-[protein] + ADP + H(+). It catalyses the reaction L-threonyl-[protein] + ATP = O-phospho-L-threonyl-[protein] + ADP + H(+). Inhibited by caffeine, LY294002 and wortmannin. Its function is as follows. Serine/threonine protein kinase involved in both mRNA surveillance and genotoxic stress response pathways. Recognizes the substrate consensus sequence [ST]-Q. Plays a central role in nonsense-mediated decay (NMD) of mRNAs containing premature stop codons by phosphorylating UPF1/RENT1. Recruited by release factors to stalled ribosomes together with SMG8 and SMG9 (forming the SMG1C protein kinase complex), and UPF1 to form the transient SURF (SMG1-UPF1-eRF1-eRF3) complex. In EJC-dependent NMD, the SURF complex associates with the exon junction complex (EJC) through UPF2 and allows the formation of an UPF1-UPF2-UPF3 surveillance complex which is believed to activate NMD. Also acts as a genotoxic stress-activated protein kinase that displays some functional overlap with ATM. Can phosphorylate p53/TP53 and is required for optimal p53/TP53 activation after cellular exposure to genotoxic stress. Its depletion leads to spontaneous DNA damage and increased sensitivity to ionizing radiation (IR). May activate PRKCI but not PRKCZ. In Homo sapiens (Human), this protein is Serine/threonine-protein kinase SMG1.